We begin with the raw amino-acid sequence, 250 residues long: UPF0736 protein RBAM_011410 (250 aa).

The protein belongs to the UPF0736 family.

The chain is UPF0736 protein RBAM_011410 from Bacillus velezensis (strain DSM 23117 / BGSC 10A6 / LMG 26770 / FZB42) (Bacillus amyloliquefaciens subsp. plantarum).